The sequence spans 57 residues: Light-harvesting protein B-808/866 alpha chain (57 aa).

N-formylmethionine is present on Met-1. The Cytoplasmic portion of the chain corresponds to 1–10 (MQPRSPVRTN). A helical membrane pass occupies residues 11–30 (IVIFTILGFVVALLIHFIVL). Position 26 (His-26) interacts with a bacteriochlorophyll. The Periplasmic segment spans residues 31 to 57 (SSPEYNWLSNAEGGALLLSAARALFGI).

This sequence belongs to the antenna complex alpha subunit family. As to quaternary structure, the core complex is formed by different alpha and beta chains, binding bacteriochlorophyll molecules, and arranged most probably in tetrameric structures disposed around the reaction center. The non-pigmented gamma chains may constitute additional components.

It is found in the cell membrane. Functionally, antenna complexes are light-harvesting systems, which transfer the excitation energy to the reaction centers. The chain is Light-harvesting protein B-808/866 alpha chain (puf2A) from Chloroflexus aurantiacus (strain ATCC 29366 / DSM 635 / J-10-fl).